We begin with the raw amino-acid sequence, 488 residues long: ATP synthase subunit beta (488 aa).

164–171 (GGAGMGKT) serves as a coordination point for ATP.

Belongs to the ATPase alpha/beta chains family. As to quaternary structure, F-type ATPases have 2 components, CF(1) - the catalytic core - and CF(0) - the membrane proton channel. CF(1) has five subunits: alpha(3), beta(3), gamma(1), delta(1), epsilon(1). CF(0) has four main subunits: a(1), b(1), b'(1) and c(9-12).

It is found in the cellular thylakoid membrane. The catalysed reaction is ATP + H2O + 4 H(+)(in) = ADP + phosphate + 5 H(+)(out). Functionally, produces ATP from ADP in the presence of a proton gradient across the membrane. The catalytic sites are hosted primarily by the beta subunits. The protein is ATP synthase subunit beta of Synechococcus sp. (strain RCC307).